We begin with the raw amino-acid sequence, 160 residues long: Ribosomal RNA large subunit methyltransferase H (160 aa).

Residues Leu-77, Gly-109, and 128–133 each bind S-adenosyl-L-methionine; that span reads FSRLTF.

It belongs to the RNA methyltransferase RlmH family. Homodimer.

It is found in the cytoplasm. It catalyses the reaction pseudouridine(1915) in 23S rRNA + S-adenosyl-L-methionine = N(3)-methylpseudouridine(1915) in 23S rRNA + S-adenosyl-L-homocysteine + H(+). Functionally, specifically methylates the pseudouridine at position 1915 (m3Psi1915) in 23S rRNA. The chain is Ribosomal RNA large subunit methyltransferase H from Desulfitobacterium hafniense (strain Y51).